Here is a 180-residue protein sequence, read N- to C-terminus: MENRLKAKYENEIRPALIEKFNYSSVMQAPKIDKIVLNMGVGDATTNSKNLDEAVEELGLISGQKPLITKAKKSIAGFRLREGMSIGAKVTLRGERMYDFLDKLVNVALPRVRDFHGVSNKAFDGRGNYTLGIHEQLIFPEIDYDKVNRVRGLDVVIVTTAQTDEESRELLAQLGMPFAK.

This sequence belongs to the universal ribosomal protein uL5 family. In terms of assembly, part of the 50S ribosomal subunit; part of the 5S rRNA/L5/L18/L25 subcomplex. Contacts the 5S rRNA and the P site tRNA. Forms a bridge to the 30S subunit in the 70S ribosome.

In terms of biological role, this is one of the proteins that bind and probably mediate the attachment of the 5S RNA into the large ribosomal subunit, where it forms part of the central protuberance. In the 70S ribosome it contacts protein S13 of the 30S subunit (bridge B1b), connecting the 2 subunits; this bridge is implicated in subunit movement. Contacts the P site tRNA; the 5S rRNA and some of its associated proteins might help stabilize positioning of ribosome-bound tRNAs. The polypeptide is Large ribosomal subunit protein uL5 (Limosilactobacillus reuteri (strain DSM 20016) (Lactobacillus reuteri)).